Consider the following 284-residue polypeptide: RNase adapter protein RapZ (284 aa).

8 to 15 provides a ligand contact to ATP; it reads GRSGSGKS. 56-59 provides a ligand contact to GTP; sequence DVRN. The segment at 266 to 284 is RNA-binding; that stretch reads RSRGKNVQSRHRTLEKRKQ.

It belongs to the RapZ-like family. RapZ subfamily. As to quaternary structure, homotrimer.

Its function is as follows. Modulates the synthesis of GlmS, by affecting the processing and stability of the regulatory small RNA GlmZ. When glucosamine-6-phosphate (GlcN6P) concentrations are high in the cell, RapZ binds GlmZ and targets it to cleavage by RNase E. Consequently, GlmZ is inactivated and unable to activate GlmS synthesis. Under low GlcN6P concentrations, RapZ is sequestered and inactivated by an other regulatory small RNA, GlmY, preventing GlmZ degradation and leading to synthesis of GlmS. The polypeptide is RNase adapter protein RapZ (Serratia proteamaculans (strain 568)).